The following is a 324-amino-acid chain: Elongation factor Ts, mitochondrial (324 aa).

A mitochondrion-targeting transit peptide spans 1-44; that stretch reads MSLLRSLRFFPVACTGRSARAVLLQPSQPWLTFHAGPSLSSAAS. N6-succinyllysine is present on residues Lys-75, Lys-132, and Lys-191. Ser-269 carries the phosphoserine modification.

Belongs to the EF-Ts family.

The protein localises to the mitochondrion. In terms of biological role, associates with the EF-Tu.GDP complex and induces the exchange of GDP to GTP. It remains bound to the aminoacyl-tRNA.EF-Tu.GTP complex up to the GTP hydrolysis stage on the ribosome. The chain is Elongation factor Ts, mitochondrial (Tsfm) from Mus musculus (Mouse).